Reading from the N-terminus, the 231-residue chain is 7-cyano-7-deazaguanine synthase (231 aa).

F8–L18 serves as a coordination point for ATP. 4 residues coordinate Zn(2+): C188, C197, C200, and C203.

It belongs to the QueC family. Zn(2+) is required as a cofactor.

The enzyme catalyses 7-carboxy-7-deazaguanine + NH4(+) + ATP = 7-cyano-7-deazaguanine + ADP + phosphate + H2O + H(+). Its pathway is purine metabolism; 7-cyano-7-deazaguanine biosynthesis. In terms of biological role, catalyzes the ATP-dependent conversion of 7-carboxy-7-deazaguanine (CDG) to 7-cyano-7-deazaguanine (preQ(0)). This Citrobacter koseri (strain ATCC BAA-895 / CDC 4225-83 / SGSC4696) protein is 7-cyano-7-deazaguanine synthase.